A 282-amino-acid chain; its full sequence is Putative phosphoesterase 244L (282 aa).

Residues Asp-45, Asn-80, and His-203 each coordinate a divalent metal cation.

The protein belongs to the metallophosphoesterase superfamily. IIV-6 244L family.

The sequence is that of Putative phosphoesterase 244L from Invertebrate iridescent virus 6 (IIV-6).